The following is a 406-amino-acid chain: Solute carrier family 22 member 18 (406 aa).

10 helical membrane-spanning segments follow: residues 8 to 28 (GIIILTYVLAALELTCLFMQF), 43 to 63 (VSFGYLQTTFGVLQLLGGPVF), 85 to 105 (ALYLLLVASCSPALPGVFLLF), 140 to 160 (LGLCFGIGIIFGSLLGGTLNT), 168 to 188 (AILAFVVTLLGAVLSFTCVPA), 226 to 246 (FLVKVISGLPSGLFLVMFSII), 258 to 278 (AGYLMSFFGILQMMIQGLVIG), 295 to 315 (LVFAVVGLGMALMSSVLHFCF), 316 to 336 (LMPGLVFSLCTLNVVTDSMLT), and 374 to 394 (GVPIFGHVQLMVNLLVLLVLW).

It belongs to the major facilitator (TC 2.A.1) superfamily. Organic cation transporter (TC 2.A.1.19) family. As to quaternary structure, interacts with RNF167. In terms of tissue distribution, expressed at high levels in fetal and adult kidney and liver, and extraembryonic membranes (yolk sac). Expressed at moderate levels in intestine, heart, lung and testis.

The protein localises to the apical cell membrane. In terms of biological role, may act as a transporter of organic cations based on a proton efflux antiport mechanism. May play a role in the transport of chloroquine and quinidine-related compounds in kidney. Plays a role in the regulation of lipid metabolism. The polypeptide is Solute carrier family 22 member 18 (Slc67a1) (Mus musculus (Mouse)).